The primary structure comprises 139 residues: Large ribosomal subunit protein uL16 (139 aa).

Residues 1–16 (MLIPRRVKHRKQHHPG) are compositionally biased toward basic residues. A disordered region spans residues 1–25 (MLIPRRVKHRKQHHPGRSGQATGGT).

This sequence belongs to the universal ribosomal protein uL16 family. As to quaternary structure, part of the 50S ribosomal subunit.

Its function is as follows. Binds 23S rRNA and is also seen to make contacts with the A and possibly P site tRNAs. This Leifsonia xyli subsp. xyli (strain CTCB07) protein is Large ribosomal subunit protein uL16.